Reading from the N-terminus, the 192-residue chain is Ion-translocating oxidoreductase complex subunit B (192 aa).

The interval 1 to 26 is hydrophobic; sequence MNAIWIAVAAVSLLGLAFGAILGYAS. The 4Fe-4S domain occupies 32 to 91; it reads EDDPVVEKIDEILPQSQCGQCGYPGCRPYAEAISCNGEKINRCAPGGEAVMLKIAELLNV. Residues Cys-49, Cys-52, Cys-57, Cys-74, Cys-117, Cys-120, Cys-123, Cys-127, Cys-147, Cys-150, Cys-153, and Cys-157 each contribute to the [4Fe-4S] cluster site. 2 consecutive 4Fe-4S ferredoxin-type domains span residues 108 to 137 and 138 to 167; these read MVAF…GATR and AMHT…LQPV.

This sequence belongs to the 4Fe4S bacterial-type ferredoxin family. RnfB subfamily. The complex is composed of six subunits: RsxA, RsxB, RsxC, RsxD, RsxE and RsxG. [4Fe-4S] cluster is required as a cofactor.

Its subcellular location is the cell inner membrane. Its function is as follows. Part of a membrane-bound complex that couples electron transfer with translocation of ions across the membrane. Required to maintain the reduced state of SoxR. The chain is Ion-translocating oxidoreductase complex subunit B from Escherichia coli O17:K52:H18 (strain UMN026 / ExPEC).